Reading from the N-terminus, the 222-residue chain is Charged multivesicular body protein 2a (222 aa).

Methionine 1 carries the N-acetylmethionine modification. The stretch at 12–53 forms a coiled coil; it reads EELLRQNQRALNRAMRELDRERQKLETQEKKIIADIKKMAKQ. The interval 56–222 is interaction with VPS4B; sequence MDAVRIMAKD…EERLKNLRRD (167 aa). At serine 184 the chain carries Phosphoserine. Threonine 185 bears the Phosphothreonine mark. Serine 188, serine 190, and serine 203 each carry phosphoserine. The stretch at 195–222 forms a coiled coil; it reads GKKAEAAASALADADADLEERLKNLRRD. The MIT-interacting motif motif lies at 210-220; the sequence is ADLEERLKNLR. The segment at 217 to 222 is interaction with VTA1; that stretch reads KNLRRD.

The protein belongs to the SNF7 family. In terms of assembly, probable core component of the endosomal sorting required for transport complex III (ESCRT-III). ESCRT-III components are thought to multimerize to form a flat lattice on the perimeter membrane of the endosome. Several assembly forms of ESCRT-III may exist that interact and act sequentially. In vitro, heteromerizes with CHMP3 (but not CHMP4) to form helical tubular structures that expose membrane-interacting sites on the outside whereas VPS4B can associate on the inside of the tubule. Interacts with CHMP1B, CHMP2B, CHMP3, CHMP4A, CHMP4B, CHMP4C and CHMP5. Interacts with VPS4A; the interaction is direct. Interacts with VPS4B; the interaction is direct. Interacts with MITD1. Interacts with VTA1; the interaction probably involves the open conformation of CHMP2A. Post-translationally, ISGylated in a CHMP5-dependent manner. Isgylation weakens and inhibits its interactions with VPS4A and VTA1 respectively.

Its subcellular location is the late endosome membrane. The protein resides in the nucleus envelope. Probable core component of the endosomal sorting required for transport complex III (ESCRT-III) which is involved in multivesicular bodies (MVBs) formation and sorting of endosomal cargo proteins into MVBs. MVBs contain intraluminal vesicles (ILVs) that are generated by invagination and scission from the limiting membrane of the endosome and mostly are delivered to lysosomes enabling degradation of membrane proteins, such as stimulated growth factor receptors, lysosomal enzymes and lipids. The MVB pathway appears to require the sequential function of ESCRT-O, -I,-II and -III complexes. ESCRT-III proteins mostly dissociate from the invaginating membrane before the ILV is released. The ESCRT machinery also functions in topologically equivalent membrane fission events, such as the terminal stages of cytokinesis. Together with SPAST, the ESCRT-III complex promotes nuclear envelope sealing and mitotic spindle disassembly during late anaphase. Recruited to the reforming nuclear envelope (NE) during anaphase by LEMD2. ESCRT-III proteins are believed to mediate the necessary vesicle extrusion and/or membrane fission activities, possibly in conjunction with the AAA ATPase VPS4. In terms of biological role, (Microbial infection) The ESCRT machinery functions in topologically equivalent membrane fission events, such as the budding of enveloped viruses (HIV-1 and other lentiviruses). Involved in HIV-1 p6- and p9-dependent virus release. This is Charged multivesicular body protein 2a (CHMP2A) from Homo sapiens (Human).